A 1130-amino-acid polypeptide reads, in one-letter code: Sterol regulatory element-binding protein 2 (1130 aa).

Residues 1 to 50 are transcriptional activation (acidic); that stretch reads MDESSELGVLETMETLTELGDELTLGDIDEMLQFVSNQVGEFPDLFSEQL. The Cytoplasmic segment spans residues 1 to 470; the sequence is MDESSELGVL…VALGMVDRSR (470 aa). Residues 53–133 form a disordered region; it reads SFPGGGSNGG…PQPQPQPPAQ (81 aa). Residues 55–64 show a composition bias toward gly residues; sequence PGGGSNGGSG. Over residues 83–93 the composition is skewed to polar residues; it reads RSFSQVPLSTF. Over residues 94 to 104 the composition is skewed to low complexity; that stretch reads SPSAASPQAPA. A compositionally biased stretch (pro residues) spans 111-131; sequence PTPPRATPVLQPRPQPQPQPP. The segment at 226–480 is interaction with LMNA; it reads QQVPVLVQPQ…ILLCVLTFLG (255 aa). The region spanning 319–369 is the bHLH domain; that stretch reads ERRTTHNIIEKRYRSSINDKIIELKDLVMGTDAKMHKSGVLRKAIDYIKYL. The interval 369–390 is leucine-zipper; it reads LQQVNHKLRQENMVLKLANQKN. Residue Lys453 forms a Glycyl lysine isopeptide (Lys-Gly) (interchain with G-Cter in SUMO2) linkage. A helical membrane pass occupies residues 471–491; that stretch reads ILLCVLTFLGLSFNPLTSLLQ. Residues 492–522 lie on the Lumenal side of the membrane; the sequence is WGGAHNTDQHPYSGSGRSVLSLESGAGGWFD. A helical membrane pass occupies residues 523-543; it reads WMVPTLLLWLVNGVIVLSVFV. Residues 544–1130 are Cytoplasmic-facing; sequence KLLVHGEPVI…LGGGTAIAAS (587 aa). Ser1087 is modified (phosphoserine).

This sequence belongs to the SREBP family. Forms a tight complex with SCAP, the SCAP-SREBP complex, in the endoplasmic reticulum membrane and the Golgi apparatus. Interacts with PAQR3; the interaction anchors the SCAP-SREBP complex to the Golgi apparatus in low cholesterol conditions. Interacts (via C-terminal domain) with RNF139. In terms of assembly, homodimer; efficient DNA binding of the soluble transcription factor fragment requires dimerization with another bHLH protein. Interacts with LMNA. In terms of processing, processed in the Golgi apparatus, releasing the protein from the membrane. At low cholesterol the SCAP-SREBP complex is recruited into COPII vesicles for export from the endoplasmic reticulum. In the Golgi, complex SREBPs are cleaved sequentially by site-1 (MBTPS1, S1P) and site-2 (MBTPS2, S2P) proteases. The first cleavage by site-1 protease occurs within the luminal loop, the second cleavage by site-2 protease occurs within the first transmembrane domain, releasing the transcription factor from the Golgi membrane. Apoptosis triggers cleavage by the cysteine proteases caspase-3 and caspase-7. Cleavage and activation is induced by mediated cholesterol efflux. Post-translationally, phosphorylated by AMPK, leading to suppress protein processing and nuclear translocation, and repress target gene expression. SCAP-free SREBF2 is ubiquitinated by the BCR(ARMC5) complex, leading to its degradation. In terms of processing, ubiquitinated; the nuclear form has a rapid turnover and is rapidly ubiquitinated and degraded by the proteasome in the nucleus.

The protein localises to the endoplasmic reticulum membrane. Its subcellular location is the golgi apparatus membrane. It localises to the cytoplasmic vesicle. The protein resides in the COPII-coated vesicle membrane. It is found in the nucleus. With respect to regulation, activation by cleavage is down-regulated upon activation of SIRT3-dependent PRKAA1/AMPK-alpha signaling cascade which leads to inhibition of ATP-consuming lipogenesis to restore cellular energy balance. Functionally, precursor of the transcription factor form (Processed sterol regulatory element-binding protein 2), which is embedded in the endoplasmic reticulum membrane. Low sterol concentrations promote processing of this form, releasing the transcription factor form that translocates into the nucleus and activates transcription of genes involved in cholesterol biosynthesis. Key transcription factor that regulates expression of genes involved in cholesterol biosynthesis. Binds to the sterol regulatory element 1 (SRE-1) (5'-ATCACCCCAC-3'). Has dual sequence specificity binding to both an E-box motif (5'-ATCACGTGA-3') and to SRE-1 (5'-ATCACCCCAC-3'). Regulates transcription of genes related to cholesterol synthesis pathway. This chain is Sterol regulatory element-binding protein 2, found in Mus musculus (Mouse).